The sequence spans 53 residues: ComX pheromone (53 aa).

A propeptide spanning residues 1-46 (MQEMVGYLIKYPNVLREVMEGNACLLGVDKDQSECIINGFKGLEIY) is cleaved from the precursor. Trp-51 carries the 3'-geranyl-2',N2-cyclotryptophan lipid modification.

As to quaternary structure, interacts directly with the sensor histidine kinase ComP and stimulates its activity. In terms of processing, trp-51 is modified by geranylation, which is essential for activity. Modified by the tryptophan prenyltransferase ComQ before export to the extracellular environment. The type of isoprenyl derivative differs among the different pherotypes and depends on ComX primary sequence.

It is found in the secreted. In terms of biological role, part of a major quorum-sensing system that regulates the development of genetic competence. Acts through the activation of the two-component regulatory system ComP/ComA composed of a sensor histidine kinase, ComP, and a response regulator, ComA. This Bacillus mojavensis protein is ComX pheromone.